The primary structure comprises 321 residues: Probable pectate lyase A (321 aa).

A signal peptide spans 1–18 (MKFVATLIACGLSGLALA). N93 carries an N-linked (GlcNAc...) asparagine glycan. Ca(2+) is bound by residues D134, D163, and D167. R220 is an active-site residue. The N-linked (GlcNAc...) asparagine glycan is linked to N238.

Belongs to the polysaccharide lyase 1 family. Requires Ca(2+) as cofactor.

It is found in the secreted. It catalyses the reaction Eliminative cleavage of (1-&gt;4)-alpha-D-galacturonan to give oligosaccharides with 4-deoxy-alpha-D-galact-4-enuronosyl groups at their non-reducing ends.. Functionally, pectinolytic enzyme consist of four classes of enzymes: pectin lyase, polygalacturonase, pectin methylesterase and rhamnogalacturonase. Among pectinolytic enzymes, pectin lyase is the most important in depolymerization of pectin, since it cleaves internal glycosidic bonds of highly methylated pectins. Favors pectate, the anion, over pectin, the methyl ester. In Neosartorya fischeri (strain ATCC 1020 / DSM 3700 / CBS 544.65 / FGSC A1164 / JCM 1740 / NRRL 181 / WB 181) (Aspergillus fischerianus), this protein is Probable pectate lyase A (plyA).